The chain runs to 230 residues: Homeobox protein Hox-B5 (230 aa).

The interval 1-135 (GGGGGNVSGS…GAAGTDGQSP (135 aa)) is disordered. Residues 49-65 (FPGQESSRFRANQNCPL) are compositionally biased toward polar residues. A compositionally biased stretch (low complexity) spans 87 to 103 (ATSSAHFTETEETSASS). An Antp-type hexapeptide motif is present at residues 137–142 (IFPWMR). The homeobox DNA-binding region spans 155 to 214 (GKRARTAYTRYQTLELEKEFHFNRYLTRRRRIEIAHTLCLSERQIKIWFQNRRMKWKKDN).

This sequence belongs to the Antp homeobox family.

The protein resides in the nucleus. In terms of biological role, sequence-specific transcription factor which is part of a developmental regulatory system that provides cells with specific positional identities on the anterior-posterior axis. In Xenopus laevis (African clawed frog), this protein is Homeobox protein Hox-B5 (hoxb5).